We begin with the raw amino-acid sequence, 131 residues long: Profilin (131 aa).

A disulfide bond links C13 and C115. The Involved in PIP2 interaction motif lies at 81-97 (AVIRGKKGSGGVTVKKT). T111 bears the Phosphothreonine mark.

Belongs to the profilin family. Occurs in many kinds of cells as a complex with monomeric actin in a 1:1 ratio.

Its subcellular location is the cytoplasm. It localises to the cytoskeleton. Binds to actin and affects the structure of the cytoskeleton. At high concentrations, profilin prevents the polymerization of actin, whereas it enhances it at low concentrations. This is Profilin from Phoenix dactylifera (Date palm).